The sequence spans 679 residues: Glycine--tRNA ligase beta subunit (679 aa).

Belongs to the class-II aminoacyl-tRNA synthetase family. As to quaternary structure, tetramer of two alpha and two beta subunits.

It localises to the cytoplasm. It catalyses the reaction tRNA(Gly) + glycine + ATP = glycyl-tRNA(Gly) + AMP + diphosphate. The polypeptide is Glycine--tRNA ligase beta subunit (Streptococcus agalactiae serotype V (strain ATCC BAA-611 / 2603 V/R)).